A 338-amino-acid chain; its full sequence is Ornithine carbamoyltransferase (338 aa).

Carbamoyl phosphate-binding positions include 56–59 (STRT), R107, and 134–137 (HPTQ). Residues N168, D232, and 236–237 (SM) each bind L-ornithine. Residues 274 to 275 (CL) and R320 contribute to the carbamoyl phosphate site.

This sequence belongs to the aspartate/ornithine carbamoyltransferase superfamily. OTCase family.

The protein resides in the cytoplasm. It catalyses the reaction carbamoyl phosphate + L-ornithine = L-citrulline + phosphate + H(+). It functions in the pathway amino-acid biosynthesis; L-arginine biosynthesis; L-arginine from L-ornithine and carbamoyl phosphate: step 1/3. In terms of biological role, reversibly catalyzes the transfer of the carbamoyl group from carbamoyl phosphate (CP) to the N(epsilon) atom of ornithine (ORN) to produce L-citrulline. The chain is Ornithine carbamoyltransferase (argI) from Buchnera aphidicola subsp. Acyrthosiphon pisum (strain APS) (Acyrthosiphon pisum symbiotic bacterium).